The chain runs to 366 residues: Homer protein homolog 1 (366 aa).

The WH1 domain maps to 1–110 (MGEQPIFSTR…EKFQEFKEAA (110 aa)). Gly2 bears the N-acetylglycine mark. The tract at residues 114–189 (KEKSQEKMEL…RTQGLSHASS (76 aa)) is disordered. The segment covering 138 to 147 (SPLTPESING) has biased composition (polar residues). Residues 193–364 (KHWEAELATL…LRDNLAKLLE (172 aa)) are a coiled coil. The tract at residues 302 to 366 (KLQEVEIRNK…DNLAKLLECS (65 aa)) is required for tetramerization. Residue Ser318 is modified to Phosphoserine.

It belongs to the Homer family. Tetramer; this tetrameric structure is critical for forming the high-order complex with SHANK1, which in turn is necessary for the structural and functional integrity of dendritic spines. Interacts with GRM1, GRM5, ITPR1, DYN3, RYR1, RYR2 and SHANK3. Interacts with IFT57 and OPHN1. Isoform 1 and isoform 2 encode coiled-coil structures that mediate homo- and heteromultimerization. Interacts with SHANK1; forms high-order polymerized complex with a mesh-like network structure, at least composed of SHANK1, HOMER1 and DLGAP1; the complex formation is SHANK1 multimerization dependent. Interacts with NFATC4. Interacts with DAGLA (via PPXXF motif); this interaction is required for the cell membrane localization of DAGLA. Interacts with SRGAP2. Highly expressed in cortex, Purkinje cells of the cerebellum, hippocampus, striatum and olfactory bulb. Isoform 1 and isoform 3 are expressed in skeletal and cardiac muscle.

The protein resides in the cytoplasm. It localises to the postsynaptic density. Its subcellular location is the synapse. It is found in the cell projection. The protein localises to the dendritic spine. Functionally, postsynaptic density scaffolding protein. Binds and cross-links cytoplasmic regions of GRM1, GRM5, ITPR1, DNM3, RYR1, RYR2, SHANK1 and SHANK3. By physically linking GRM1 and GRM5 with ER-associated ITPR1 receptors, it aids the coupling of surface receptors to intracellular calcium release. May also couple GRM1 to PI3 kinase through its interaction with AGAP2. Differentially regulates the functions of the calcium activated channel ryanodine receptors RYR1 and RYR2. Isoform 1 decreases the activity of RYR2, and increases the activity of RYR1, whereas isoform 3 counteracts the effects by competing for binding sites. Isoform 1 regulates the trafficking and surface expression of GRM5. Isoform 3 acts as a natural dominant negative, in dynamic competition with constitutively expressed isoform 1, and isoform 2 to regulate synaptic metabotropic glutamate function. Isoform 3, may be involved in the structural changes that occur at synapses during long-lasting neuronal plasticity and development. Forms a high-order complex with SHANK1, which in turn is necessary for the structural and functional integrity of dendritic spines. Negatively regulates T cell activation by inhibiting the calcineurin-NFAT pathway. Acts by competing with calcineurin/PPP3CA for NFAT protein binding, hence preventing NFAT activation by PPP3CA. The sequence is that of Homer protein homolog 1 from Rattus norvegicus (Rat).